A 132-amino-acid chain; its full sequence is Agouti-signaling protein (132 aa).

The signal sequence occupies residues 1 to 22 (MDVTRLLLATLLVFLCFFTVYS). N-linked (GlcNAc...) asparagine glycosylation occurs at asparagine 39. The tract at residues 62-93 (ISRKEAEKKRSSKKEASMKKVAQPRTPLSAPC) is disordered. Over residues 63–79 (SRKEAEKKRSSKKEASM) the composition is skewed to basic and acidic residues. 5 cysteine pairs are disulfide-bonded: cysteine 93–cysteine 108, cysteine 100–cysteine 114, cysteine 107–cysteine 125, cysteine 111–cysteine 132, and cysteine 116–cysteine 123. Residues 93–132 (CVATRDSCKPPAPACCDPCASCQCRFFRSACSCRVLSLNC) enclose the Agouti domain.

It is found in the secreted. Its function is as follows. Involved in the regulation of melanogenesis. The binding of ASP to MC1R precludes alpha-MSH initiated signaling and thus blocks production of cAMP, leading to a down-regulation of eumelanogenesis (brown/black pigment) and thus increasing synthesis of pheomelanin (yellow/red pigment). The protein is Agouti-signaling protein (ASIP) of Trachypithecus auratus (Javan langur).